The sequence spans 31 residues: Photosystem I reaction center subunit XII (31 aa).

Residues glutamine 7 to glycine 26 form a helical membrane-spanning segment.

It belongs to the PsaM family.

Its subcellular location is the plastid. It localises to the chloroplast thylakoid membrane. This is Photosystem I reaction center subunit XII from Euglena myxocylindracea.